A 132-amino-acid chain; its full sequence is Small ribosomal subunit protein uS8 (132 aa).

It belongs to the universal ribosomal protein uS8 family. As to quaternary structure, part of the 30S ribosomal subunit. Contacts proteins S5 and S12.

Its function is as follows. One of the primary rRNA binding proteins, it binds directly to 16S rRNA central domain where it helps coordinate assembly of the platform of the 30S subunit. In Baumannia cicadellinicola subsp. Homalodisca coagulata, this protein is Small ribosomal subunit protein uS8.